Reading from the N-terminus, the 501-residue chain is METILEQQRRYHEEKERLMDVMAKEMLTKKSTLRDQINSDHRTRAMQDRYMEVSGNLRDLYDDKDGLRKEELNAISGPNEFAEFYNRLKQIKEFHRKHPNEICVPMSVEFEELLKARENPSEEAQNLVEFTDEEGYGRYLDLHDCYLKYINLKASEKLDYITYLSIFDQLFDIPKERKNAEYKRYLEMLLEYLQDYTDRVKPLQDQNELFGKIQAEFEKKWENGTFPGWPKETSSALTHAGAHLDLSAFSSWEELASLGLDRLKSALLALGLKCGGTLEERAQRLFSTKGKSLESLDTSLFAKNPKSKGTKRDTERNKDIAFLEAQIYEYVEILGEQRHLTHENVQRKQARTGEEREEEEEEQISESESEDEENEIIYNPKNLPLGWDGKPIPYWLYKLHGLNINYNCEICGNYTYRGPKAFQRHFAEWRHAHGMRCLGIPNTAHFANVTQIEDAVSLWAKLKLQKASERWQPDTEEEYEDSSGNVVNKKTYEDLKRQGLL.

Methionine 1 bears the N-acetylmethionine mark. A phosphoserine mark is found at serine 54 and serine 121. A Nuclear localization signal motif is present at residues 175-179; it reads KERKN. Phosphoserine occurs at positions 295 and 299. Residues 343 to 354 are compositionally biased toward basic and acidic residues; sequence ENVQRKQARTGE. Residues 343–374 are disordered; it reads ENVQRKQARTGEEREEEEEEQISESESEDEEN. A compositionally biased stretch (acidic residues) spans 355–374; it reads EREEEEEEQISESESEDEEN. Phosphoserine occurs at positions 365, 367, and 369. A Matrin-type zinc finger spans residues 406–437; the sequence is YNCEICGNYTYRGPKAFQRHFAEWRHAHGMRC. At threonine 475 the chain carries Phosphothreonine.

It belongs to the SF3A3 family. In terms of assembly, component of the 17S U2 SnRNP complex, a ribonucleoprotein complex that contains small nuclear RNA (snRNA) U2 and a number of specific proteins. Part of the SF3A subcomplex of the 17S U2 SnRNP complex which is composed of three subunits; SF3A3/SAP61, SF3A2/SAP62 and SF3A1/SAP114. SF3A associates with the splicing factor SF3B and a 12S RNA unit to form the mature 17S U2 small nuclear ribonucleoprotein complex (17S U2 snRNP). Identified in the spliceosome 'E' complex, a precursor of the spliceosome 'A' complex. Identified in the spliceosome 'A' and 'B' complexes. Identified in the spliceosome 'C' complex. In terms of tissue distribution, ubiquitous.

The protein resides in the nucleus speckle. It is found in the nucleus. In terms of biological role, component of the 17S U2 SnRNP complex of the spliceosome, a large ribonucleoprotein complex that removes introns from transcribed pre-mRNAs. The 17S U2 SnRNP complex (1) directly participates in early spliceosome assembly and (2) mediates recognition of the intron branch site during pre-mRNA splicing by promoting the selection of the pre-mRNA branch-site adenosine, the nucleophile for the first step of splicing. Within the 17S U2 SnRNP complex, SF3A3 is part of the SF3A subcomplex that contributes to the assembly of the 17S U2 snRNP, and the subsequent assembly of the pre-spliceosome 'E' complex and the pre-catalytic spliceosome 'A' complex. Involved in pre-mRNA splicing as a component of pre-catalytic spliceosome 'B' complexes. The protein is Splicing factor 3A subunit 3 (SF3A3) of Homo sapiens (Human).